An 827-amino-acid polypeptide reads, in one-letter code: SH3-containing GRB2-like protein 3-interacting protein 1 (827 aa).

Disordered stretches follow at residues 1-116, 143-199, and 223-278; these read MMEG…SHKK, IGNI…ALAP, and IWGS…QAAT. Composition is skewed to basic and acidic residues over residues 16–32 and 40–53; these read RKKE…DRDG and LPYH…REGG. 8 positions are modified to phosphoserine: S78, S104, S105, S107, S149, S151, S156, and S169. T180 and T182 each carry phosphothreonine. Phosphoserine is present on S236. Residues 245-260 are compositionally biased toward pro residues; sequence TGTPPPLPPKTVPATP. 2 positions are modified to phosphothreonine: T247 and T259. Phosphoserine occurs at positions 265, 287, 289, 300, 316, and 319. The segment covering 265–276 has biased composition (polar residues); the sequence is SPLTVATGNDQA. Positions 315–505 are disordered; it reads FSDASPEHVT…IAPLARAEST (191 aa). The span at 319 to 333 shows a compositional bias: basic and acidic residues; sequence SPEHVTPELTPREKV. Phosphothreonine occurs at positions 324, 328, and 335. A compositionally biased stretch (low complexity) spans 335-345; sequence TPPAASDIPAD. Residues 346–369 show a composition bias toward pro residues; that stretch reads SPTPGPPGPPGSAGPPGPPGPRNV. S371 carries the post-translational modification Phosphoserine. A compositionally biased stretch (basic and acidic residues) spans 377-392; it reads EVQKKVAEQTFIKDDY. Position 398 is a phosphoserine (S398). At T409 the chain carries Phosphothreonine. Residues 436 to 455 show a composition bias toward low complexity; it reads ASGASSPARPATPLVPCSCS. Residues 456 to 474 show a composition bias toward pro residues; the sequence is TPPPPPPRPPSRPKLPPGK. Low complexity predominate over residues 481 to 491; that stretch reads SRPFSPPIHSS. Phosphoserine is present on S485. The 269-residue stretch at 558–826 folds into the MHD domain; the sequence is TLPVAAAFTE…RFAAGKYLAD (269 aa). Interaction with DPF motifs-containing proteins stretches follow at residues 560–566, 592–594, 666–669, and 812–817; these read PVAAAFT, SFP, TYYN, and SLIKKR. The necessary and sufficient to mediate interaction with CANX stretch occupies residues 648–827; it reads MPNLMTHLKK…FAAGKYLADN (180 aa).

In terms of assembly, interacts with proteins essential or regulating the formation of functional clathrin-coated pits. Interacts with CANX. Interacts with AP2A1. Interacts with EPS15. Interacts with SH3GL3. Interacts with AMPH. Interacts with ITSN1 (via SH3 domains). Interacts with and REPS1. Specifically expressed in brain. Also detected at lower levels in spleen and adipose tissue.

It is found in the membrane. The protein localises to the clathrin-coated pit. In terms of biological role, may function in clathrin-mediated endocytosis. Has both a membrane binding/tubulating activity and the ability to recruit proteins essential to the formation of functional clathrin-coated pits. Has a preference for membranes enriched in phosphatidylserine and phosphoinositides and is required for the endocytosis of the transferrin receptor. May also bind tubulin. May play a role in the regulation of energy homeostasis. The polypeptide is SH3-containing GRB2-like protein 3-interacting protein 1 (SGIP1) (Psammomys obesus (Fat sand rat)).